Consider the following 631-residue polypeptide: MPAGRGRPLRAADMKKDVRILLVGEPRVGKTSLIMSLVSEEFPEEVPPRAEEITIPADVTPERVPTHIVDYSEAEQSDEQLHQEISQANVICIVYAVNNKHSIDKVTSRWIPLINERTDKDSRLPLILVGNKSDLVEYSSMETILPIMNQYTEIETCVECSAKNLKNISELFYYAQKAVLHPTGPLYCPEEKEMKPACIKALTRIFKISDQDNDGTLNDAELNFFQRICFNTPLAPQALEDVKNVVRKHISDGVADGGLTLKGFLFLHTLFIQRGRHETTWTVLRRFGYDDDLDLTPEYLFPLLKIPPDCTTELNHHAYLFLQSTFDKHDLDRDCALSPDELKDLFKVFPYIPWGPDVNNTVCTNEKGWITYQGFLSQWTLTTYLDVQRCLEYLGYLGYSILTEQESQASAITVTRDKKIDLQKKQTQRNVFRCNVIGMKNCGKSGVLQALLGRNLTRQKKIRDDHKSYYAINTVYVYGQEKYLLLHDISESEFLTEAEILCDVVCLVYDVSNPKSFEYCARIFKQHFMDSRIPCLIVAAKSDLHEVKQEYSISPTDFCRKHKMPPPQAFTCNTADAPSKDIFVKLTTMAMYPHVTQADLKSSTFWLRASFGATVFAVLGFAMYKALLKQR.

Residues M1–F605 are Cytoplasmic-facing. The Miro 1 domain maps to K15–H181. Residues R27, G29, K30, T31, and S32 each coordinate GTP. A Mg(2+)-binding site is contributed by T31. Positions 48 and 70 each coordinate Mg(2+). S72 is a binding site for GTP. K105 carries the N6-acetyllysine modification. Residues N131, K132, D134, A162, and K163 each coordinate GTP. K166 participates in a covalent cross-link: Glycyl lysine isopeptide (Lys-Gly) (interchain with G-Cter in ubiquitin). Residues A197 to T232 enclose the EF-hand 1 domain. Residues D210, D212, D214, T216, and E221 each coordinate Ca(2+). K248 participates in a covalent cross-link: Glycyl lysine isopeptide (Lys-Gly) (interchain with G-Cter in ubiquitin). One can recognise an EF-hand 2 domain in the interval H317–I352. 5 residues coordinate Ca(2+): D330, D332, D334, A336, and E341. A Miro 2 domain is found at R429–Y592. GTP-binding residues include N441, C442, G443, K444, S445, G446, K460, K541, D543, T571, and C572. N441 contacts Mg(2+). A Glycyl lysine isopeptide (Lys-Gly) (interchain with G-Cter in ubiquitin) cross-link involves residue K585. A helical; Anchor for type IV membrane protein transmembrane segment spans residues W606–L628. At K629–R631 the chain is on the mitochondrial intermembrane side.

This sequence belongs to the mitochondrial Rho GTPase family. As to quaternary structure, homodimer. Interacts with the kinesin-binding proteins TRAK1/OIP106 and TRAK2/GRIF1, forming a link between mitochondria and the trafficking apparatus of the microtubules. Interacts with RAP1GDS1. Interacts with ARMCX1. Found in a complex with KIF5B, OGT, RHOT2 and TRAK1. Post-translationally, ubiquitinated by PRKN during mitophagy, leading to its degradation and enhancement of mitophagy. Deubiquitinated by USP30. Acetylation on Lys-105 decreases sensitivity of mitochondrial transport to elevated Ca(2+) levels, increases mitochondrial transport and promotes axon growth. Deacetylated by HDAC6 which blocks mitochondrial transport and mediates axon growth inhibition.

It is found in the mitochondrion outer membrane. It carries out the reaction GTP + H2O = GDP + phosphate + H(+). It catalyses the reaction ATP + H2O = ADP + phosphate + H(+). The catalysed reaction is UTP + H2O = UDP + phosphate + H(+). Its function is as follows. Atypical mitochondrial nucleoside-triphosphatase (NTPase) involved in mitochondrial trafficking. Probably involved in control of anterograde transport of mitochondria and their subcellular distribution. Promotes mitochondrial fission during high calcium conditions. Can hydrolyze GTP, ATP and UTP. The polypeptide is Mitochondrial Rho GTPase 1 (RHOT1) (Bos taurus (Bovine)).